The primary structure comprises 403 residues: Keratin, type I cytoskeletal 19 (403 aa).

Residues 1–82 are head; that stretch reads MTSYSYRQTS…AVSDGLLSGN (82 aa). Residue Arg7 is modified to Omega-N-methylarginine. Residues Ser14 and Ser22 each carry the phosphoserine modification. An Asymmetric dimethylarginine; alternate modification is found at Arg24. Residue Arg24 is modified to Omega-N-methylarginine; alternate. The residue at position 27 (Ser27) is a Phosphoserine. Residue Arg32 is modified to Omega-N-methylarginine. Residues Ser35 and Ser40 each carry the phosphoserine modification. An omega-N-methylarginine mark is found at Arg43 and Arg51. Position 57 is a phosphoserine (Ser57). Arg64 is modified (omega-N-methylarginine). Phosphoserine is present on residues Ser67 and Ser75. The segment at 83-118 is coil 1A; that stretch reads EKITMQNLNDRLASYLDKVRALEQANGELEVKIRDW. One can recognise an IF rod domain in the interval 83–394; sequence EKITMQNLND…SLLEGQEAHY (312 aa). The segment at 119 to 136 is linker 1; it reads YQKQGPGPSRDYNHYFKT. The coil 1B stretch occupies residues 137 to 228; that stretch reads IEDLRDKILG…KNHEEEITAL (92 aa). The segment at 229 to 251 is linker 12; the sequence is RSQVGGQVSVEVDSTPGVDLAKI. The segment at 247-393 is necessary for interaction with PNN; it reads DLAKILSEMR…RSLLEGQEAH (147 aa). The tract at residues 252–390 is coil 2; the sequence is LSEMRSQYEI…ATYRSLLEGQ (139 aa). Phosphothreonine is present on Thr326. Residues 391–403 form a rod-like helical tail region; that stretch reads EAHYNNLPTPKAI. Tyr394 carries the phosphotyrosine modification.

This sequence belongs to the intermediate filament family. As to quaternary structure, heterotetramer of two type I and two type II keratins. Interacts with PNN and the actin-binding domain of DMD.

In terms of biological role, involved in the organization of myofibers. Together with KRT8, helps to link the contractile apparatus to dystrophin at the costameres of striated muscle. The sequence is that of Keratin, type I cytoskeletal 19 (Krt19) from Mus musculus (Mouse).